The primary structure comprises 423 residues: Histidine--tRNA ligase (423 aa).

The protein belongs to the class-II aminoacyl-tRNA synthetase family. Homodimer.

It is found in the cytoplasm. The catalysed reaction is tRNA(His) + L-histidine + ATP = L-histidyl-tRNA(His) + AMP + diphosphate + H(+). In Desulfosudis oleivorans (strain DSM 6200 / JCM 39069 / Hxd3) (Desulfococcus oleovorans), this protein is Histidine--tRNA ligase.